We begin with the raw amino-acid sequence, 392 residues long: RNA-binding motif protein, X-linked-like-2 (392 aa).

The RRM domain maps to 8 to 86 (GKLFIGGLNL…KAIKVAQATK (79 aa)). The span at 67–78 (RDMNGKSLDGKA) shows a compositional bias: basic and acidic residues. Residues 67–392 (RDMNGKSLDG…LERGGGRSRY (326 aa)) are disordered. The span at 150–163 (RGPPPRRVGPPPKR) shows a compositional bias: pro residues. 2 stretches are compositionally biased toward basic and acidic residues: residues 194-229 (PRRE…REPR) and 238-283 (YTHR…REPF). The span at 319–331 (YSGGRDSYSSSYG) shows a compositional bias: low complexity. The segment covering 381-392 (GRLERGGGRSRY) has biased composition (basic and acidic residues).

Expressed predominantly in spermatocytes and less in round spermatids (at protein level). Expressed in germ cells.

Its subcellular location is the nucleus. The protein is RNA-binding motif protein, X-linked-like-2 (RBMXL2) of Homo sapiens (Human).